The sequence spans 248 residues: PF03932 family protein CutC (248 aa).

This sequence belongs to the CutC family. As to quaternary structure, homodimer.

It is found in the cytoplasm. The sequence is that of PF03932 family protein CutC from Shigella boydii serotype 4 (strain Sb227).